The primary structure comprises 204 residues: Factor arrest protein 3 (204 aa).

As to quaternary structure, component of a complex at least composed of FAR3, FAR7, FAR8, FAR10, FAR11 and VPS64.

The protein resides in the endoplasmic reticulum. Participates in the control of the reentry into the cell cycle following pheromone treatment. In Saccharomyces cerevisiae (strain ATCC 204508 / S288c) (Baker's yeast), this protein is Factor arrest protein 3 (FAR3).